We begin with the raw amino-acid sequence, 378 residues long: Lipoyl synthase, mitochondrial (378 aa).

The [4Fe-4S] cluster site is built by Cys-97, Cys-102, Cys-108, Cys-128, Cys-132, Cys-135, and Ser-343. In terms of domain architecture, Radical SAM core spans 111–332; that stretch reads GSDKSAATAT…RQRALDMGFL (222 aa).

The protein belongs to the radical SAM superfamily. Lipoyl synthase family. [4Fe-4S] cluster serves as cofactor.

It localises to the mitochondrion. It carries out the reaction [[Fe-S] cluster scaffold protein carrying a second [4Fe-4S](2+) cluster] + N(6)-octanoyl-L-lysyl-[protein] + 2 oxidized [2Fe-2S]-[ferredoxin] + 2 S-adenosyl-L-methionine + 4 H(+) = [[Fe-S] cluster scaffold protein] + N(6)-[(R)-dihydrolipoyl]-L-lysyl-[protein] + 4 Fe(3+) + 2 hydrogen sulfide + 2 5'-deoxyadenosine + 2 L-methionine + 2 reduced [2Fe-2S]-[ferredoxin]. The protein operates within protein modification; protein lipoylation via endogenous pathway; protein N(6)-(lipoyl)lysine from octanoyl-[acyl-carrier-protein]: step 2/2. In terms of biological role, catalyzes the radical-mediated insertion of two sulfur atoms into the C-6 and C-8 positions of the octanoyl moiety bound to the lipoyl domains of lipoate-dependent enzymes, thereby converting the octanoylated domains into lipoylated derivatives. This chain is Lipoyl synthase, mitochondrial, found in Phaeosphaeria nodorum (strain SN15 / ATCC MYA-4574 / FGSC 10173) (Glume blotch fungus).